Reading from the N-terminus, the 160-residue chain is Ribosomal RNA large subunit methyltransferase H (160 aa).

S-adenosyl-L-methionine contacts are provided by residues L76, G108, and 127–132 (LGELTW).

The protein belongs to the RNA methyltransferase RlmH family. As to quaternary structure, homodimer.

It localises to the cytoplasm. It catalyses the reaction pseudouridine(1915) in 23S rRNA + S-adenosyl-L-methionine = N(3)-methylpseudouridine(1915) in 23S rRNA + S-adenosyl-L-homocysteine + H(+). Specifically methylates the pseudouridine at position 1915 (m3Psi1915) in 23S rRNA. The chain is Ribosomal RNA large subunit methyltransferase H from Brucella anthropi (strain ATCC 49188 / DSM 6882 / CCUG 24695 / JCM 21032 / LMG 3331 / NBRC 15819 / NCTC 12168 / Alc 37) (Ochrobactrum anthropi).